We begin with the raw amino-acid sequence, 1236 residues long: ATP-dependent helicase/nuclease subunit A (1236 aa).

The UvrD-like helicase ATP-binding domain maps to 2-457 (AHWTIEQEEA…VDLNKNFRSH (456 aa)). An ATP-binding site is contributed by 23–30 (AAAGSGKT). One can recognise a UvrD-like helicase C-terminal domain in the interval 515–816 (NTAKRVEICI…RIMSIHKSKG (302 aa)).

The protein belongs to the helicase family. AddA subfamily. Heterodimer of AddA and AddB/RexB. Mg(2+) is required as a cofactor.

The catalysed reaction is Couples ATP hydrolysis with the unwinding of duplex DNA by translocating in the 3'-5' direction.. It carries out the reaction ATP + H2O = ADP + phosphate + H(+). Its function is as follows. The heterodimer acts as both an ATP-dependent DNA helicase and an ATP-dependent, dual-direction single-stranded exonuclease. Recognizes the chi site generating a DNA molecule suitable for the initiation of homologous recombination. The AddA nuclease domain is required for chi fragment generation; this subunit has the helicase and 3' -&gt; 5' nuclease activities. The sequence is that of ATP-dependent helicase/nuclease subunit A from Syntrophomonas wolfei subsp. wolfei (strain DSM 2245B / Goettingen).